A 373-amino-acid chain; its full sequence is Lipoyl synthase (373 aa).

Residues 14–36 are disordered; sequence VSNDHPSSSPLQPGVKQSGEDKI. [4Fe-4S] cluster-binding residues include Cys-81, Cys-86, Cys-92, Cys-107, Cys-111, Cys-114, and Ser-323. The region spanning 93-312 is the Radical SAM core domain; the sequence is FSHGTATFMI…EEYGMALGFS (220 aa). Residues 346–373 form a disordered region; sequence PAVSSTEHRERNTIASKSASKTESIHHR. Residues 358 to 367 are compositionally biased toward polar residues; that stretch reads TIASKSASKT.

It belongs to the radical SAM superfamily. Lipoyl synthase family. [4Fe-4S] cluster serves as cofactor.

It is found in the cytoplasm. The enzyme catalyses [[Fe-S] cluster scaffold protein carrying a second [4Fe-4S](2+) cluster] + N(6)-octanoyl-L-lysyl-[protein] + 2 oxidized [2Fe-2S]-[ferredoxin] + 2 S-adenosyl-L-methionine + 4 H(+) = [[Fe-S] cluster scaffold protein] + N(6)-[(R)-dihydrolipoyl]-L-lysyl-[protein] + 4 Fe(3+) + 2 hydrogen sulfide + 2 5'-deoxyadenosine + 2 L-methionine + 2 reduced [2Fe-2S]-[ferredoxin]. The protein operates within protein modification; protein lipoylation via endogenous pathway; protein N(6)-(lipoyl)lysine from octanoyl-[acyl-carrier-protein]: step 2/2. Its function is as follows. Catalyzes the radical-mediated insertion of two sulfur atoms into the C-6 and C-8 positions of the octanoyl moiety bound to the lipoyl domains of lipoate-dependent enzymes, thereby converting the octanoylated domains into lipoylated derivatives. The sequence is that of Lipoyl synthase from Xylella fastidiosa (strain M23).